Reading from the N-terminus, the 523-residue chain is Bifunctional purine biosynthesis protein PurH (523 aa).

Residues 4–152 (DHIRRPIRRA…KNHPSVAVVT (149 aa)) form the MGS-like domain.

This sequence belongs to the PurH family.

The catalysed reaction is (6R)-10-formyltetrahydrofolate + 5-amino-1-(5-phospho-beta-D-ribosyl)imidazole-4-carboxamide = 5-formamido-1-(5-phospho-D-ribosyl)imidazole-4-carboxamide + (6S)-5,6,7,8-tetrahydrofolate. The enzyme catalyses IMP + H2O = 5-formamido-1-(5-phospho-D-ribosyl)imidazole-4-carboxamide. It functions in the pathway purine metabolism; IMP biosynthesis via de novo pathway; 5-formamido-1-(5-phospho-D-ribosyl)imidazole-4-carboxamide from 5-amino-1-(5-phospho-D-ribosyl)imidazole-4-carboxamide (10-formyl THF route): step 1/1. It participates in purine metabolism; IMP biosynthesis via de novo pathway; IMP from 5-formamido-1-(5-phospho-D-ribosyl)imidazole-4-carboxamide: step 1/1. The chain is Bifunctional purine biosynthesis protein PurH from Mycobacterium marinum (strain ATCC BAA-535 / M).